A 176-amino-acid chain; its full sequence is Cytochrome b561 homolog 1 (176 aa).

The Cytoplasmic segment spans residues 1-7; it reads MNRFSKT. The helical transmembrane segment at 8–28 threads the bilayer; the sequence is QIYLHWITLLFVAITYAAMEL. H12 contacts heme b. The Periplasmic segment spans residues 29 to 45; it reads RGWFPKGSSTYLLMRET. H46 is a heme b binding site. Residues 46–63 form a helical membrane-spanning segment; the sequence is HYNAGIFVWVLMFSRLII. Topologically, residues 64-85 are cytoplasmic; it reads KHRYSDPSIVPPPPAWQMKAAS. The chain crosses the membrane as a helical span at residues 86-106; it reads LMHIMLYITFLALPLLGIALM. Topologically, residues 107–141 are periplasmic; that stretch reads AYSGKSWSFLGFNVSPFVTPNSEIKALIKNIHETW. H138 and H152 together coordinate heme b. Residues 142 to 162 form a helical membrane-spanning segment; that stretch reads ANIGYFLIAAHAGAALFHHYI. Topologically, residues 163 to 176 are cytoplasmic; that stretch reads QKDNTLLRMMPRRK.

This sequence belongs to the cytochrome b561 family. Heme b is required as a cofactor.

It is found in the cell inner membrane. This is Cytochrome b561 homolog 1 (yodB) from Escherichia coli (strain K12).